Reading from the N-terminus, the 108-residue chain is UPF0145 protein Patl_2194 (108 aa).

It belongs to the UPF0145 family.

This is UPF0145 protein Patl_2194 from Pseudoalteromonas atlantica (strain T6c / ATCC BAA-1087).